The primary structure comprises 453 residues: O-glucose prenyltransferase PaPT (453 aa).

An L-tryptophan-binding site is contributed by 95-96 (AP). The substrate site is built by K210, Y212, R279, K281, Y283, Y368, and Y435.

It belongs to the tryptophan dimethylallyltransferase family.

Its pathway is mycotoxin biosynthesis. Its function is as follows. O-glucose prenyltransferase; part of the 2 gene clusters that mediate the biosynthesis of fusicoccins, diterpene glucosides that display phytohormone-like activity and function as potent activators of plasma membrane H(+)-ATPases in plants by modifying 14-3-3 proteins and cause the plant disease constriction canker. The first step in the pathway is performed by the fusicoccadiene synthase PaFS that possesses both prenyl transferase and terpene cyclase activity, converting isopentenyl diphosphate and dimethylallyl diphosphate into geranylgeranyl diphosphate (GGDP) and successively converting GGDP into fusicocca-2,10(14)-diene, a precursor for fusicoccin H. The second step is the oxidation at the C-8 position by the cytochrome P450 monooxygenase PaP450-2 to yield fusicocca-2,10(14)-diene-8-beta-ol. The cytochrome P450 monooxygenase PaP450-1 then catalyzes the hydroxylation at the C-16 position to produce fusicocca-2,10(14)-diene-8-beta,16-diol. The dioxygenase fc-dox then catalyzes the 16-oxydation of fusicocca-2,10(14)-diene-8-beta,16-diol to yield an aldehyde (8-beta-hydroxyfusicocca-1,10(14)-dien-16-al). The short-chain dehydrogenase/reductase fc-sdr catalyzes the reduction of the aldehyde to yield fusicocca-1,10(14)-diene-8-beta,16-diol. The next step is the hydroxylation at C-9 performed by the cytochrome P450 monooxygenase PaP450-3 that leads to fusicoccin H aglycon which is glycosylated to fusicoccin H by the O-glycosyltransferase PaGT. Hydroxylation at C-12 by the cytochrome P450 monooxygenase PaP450-4 leads then to the production of fusicoccin Q and is followed by methylation by the O-methyltransferase PaMT to yield fusicoccin P. Fusicoccin P is further converted to fusicoccin J via prenylation by the O-glucose prenyltransferase PaPT. Cytochrome P450 monooxygenase PaP450-5 then performs hydroxylation at C-19 to yield dideacetyl-fusicoccin A which is acetylated to 3'-O-deacetyl-fusicoccin A by the O-acetyltransferase PaAT-2. Finally, a another acetylation by the O-acetyltransferase PaAT-1 yields fusicoccin A. This chain is O-glucose prenyltransferase PaPT, found in Phomopsis amygdali (Fusicoccum amygdali).